Here is a 707-residue protein sequence, read N- to C-terminus: Anti-sigma-I factor RsgI9 (707 aa).

The Cytoplasmic segment spans residues 1–149 (MKITGVIVRI…NFSRISNIKN (149 aa)). Residues 3 to 50 (ITGVIVRIHKDRAIIRTDDNRLLAVKRHNDMMVGQIVSFDANEVHKVE) form the RsgI N-terminal anti-sigma domain. A helical membrane pass occupies residues 150–172 (FSRIASIAAAFVLIFLFGRNVML). Over 173-707 (NNSSDSEYAY…DSEEKKEYIQ (535 aa)) the chain is Extracellular. Positions 256 to 283 (NDKNKKTRDKREEKIDELKETIEQGIEA) form a coiled coil. The tract at residues 345–392 (EDNTELAPTPTPVPPETPEPTPTPTASEATPSNSPVESKSPEAVPELG) is disordered. Residues 353 to 367 (TPTPVPPETPEPTPT) are compositionally biased toward pro residues. Positions 368–379 (PTASEATPSNSP) are enriched in low complexity.

The protein resides in the cell membrane. This is Anti-sigma-I factor RsgI9 from Acetivibrio thermocellus (strain ATCC 27405 / DSM 1237 / JCM 9322 / NBRC 103400 / NCIMB 10682 / NRRL B-4536 / VPI 7372) (Clostridium thermocellum).